A 490-amino-acid chain; its full sequence is ATP synthase subunit beta, plastid (490 aa).

170 to 177 is an ATP binding site; it reads GGAGVGKT.

It belongs to the ATPase alpha/beta chains family. As to quaternary structure, F-type ATPases have 2 components, CF(1) - the catalytic core - and CF(0) - the membrane proton channel. CF(1) has five subunits: alpha(3), beta(3), gamma(1), delta(1), epsilon(1). CF(0) has four main subunits: a(1), b(1), b'(1) and c(9-12).

Its subcellular location is the plastid thylakoid membrane. The catalysed reaction is ATP + H2O + 4 H(+)(in) = ADP + phosphate + 5 H(+)(out). Its function is as follows. Produces ATP from ADP in the presence of a proton gradient across the membrane. The catalytic sites are hosted primarily by the beta subunits. The protein is ATP synthase subunit beta, plastid of Cuscuta reflexa (Southern Asian dodder).